A 165-amino-acid chain; its full sequence is Glutamyl-tRNA(Gln) amidotransferase subunit F, mitochondrial (165 aa).

A compositionally biased stretch (basic and acidic residues) spans 137-153; the sequence is VSDQRGERGFDTSELRT. Residues 137–165 are disordered; that stretch reads VSDQRGERGFDTSELRTRINRAKSTAEKE.

It belongs to the GatF family. Subunit of the heterotrimeric GatFAB amidotransferase (AdT) complex, composed of A, B and F subunits.

It localises to the mitochondrion inner membrane. It catalyses the reaction L-glutamyl-tRNA(Gln) + L-glutamine + ATP + H2O = L-glutaminyl-tRNA(Gln) + L-glutamate + ADP + phosphate + H(+). Functionally, allows the formation of correctly charged Gln-tRNA(Gln) through the transamidation of misacylated Glu-tRNA(Gln) in the mitochondria. The reaction takes place in the presence of glutamine and ATP through an activated gamma-phospho-Glu-tRNA(Gln). Required for proper protein synthesis within the mitochondrion. This chain is Glutamyl-tRNA(Gln) amidotransferase subunit F, mitochondrial, found in Clavispora lusitaniae (strain ATCC 42720) (Yeast).